Here is a 201-residue protein sequence, read N- to C-terminus: Retinol binding protein 4 (201 aa).

The first 18 residues, 1–18, serve as a signal peptide directing secretion; that stretch reads MAWVWALVLLAALGSARA. 3 disulfide bridges follow: Cys-22–Cys-178, Cys-88–Cys-192, and Cys-138–Cys-147. Gln-116 is a binding site for substrate. Arg-139 carries the post-translational modification Omega-N-methylarginine.

It belongs to the calycin superfamily. Lipocalin family. Interacts with TTR. Interaction with TTR prevents its loss by filtration through the kidney glomeruli. Interacts with STRA6. Highly expressed in liver. Also expressed in adipose tissue. Expressed by endometrium from days 16-25 and by unattached chorioallantois from days 30-36 during pregnancy.

The protein resides in the secreted. Retinol-binding protein that mediates retinol transport in blood plasma. Delivers retinol from the liver stores to the peripheral tissues. Transfers the bound all-trans retinol to STRA6, that then facilitates retinol transport across the cell membrane. This Felis catus (Cat) protein is Retinol binding protein 4.